A 758-amino-acid polypeptide reads, in one-letter code: Aspartyl/asparaginyl beta-hydroxylase (758 aa).

Residues 1 to 46 are disordered; sequence MAQRKNAKSSGNSSSSGSGSGSTSAGSSSPGARRETKHGGHKNGRK. The Cytoplasmic segment spans residues 1–53; it reads MAQRKNAKSSGNSSSSGSGSGSTSAGSSSPGARRETKHGGHKNGRKGGLSGTS. A compositionally biased stretch (low complexity) spans 9 to 31; that stretch reads SSGNSSSSGSGSGSTSAGSSSPG. Residue Ser-14 is modified to Phosphoserine. Residues 54 to 74 form a helical; Signal-anchor for type II membrane protein membrane-spanning segment; it reads FFTWFMVIALLGVWTSVAVVW. An N-linked (GlcNAc...) asparagine glycan is attached at Leu-64. The Lumenal segment spans residues 75 to 758; sequence FDLVDYEEVL…PQQRRSLPAI (684 aa). Ca(2+) contacts are provided by Asp-91, Asp-93, Asp-95, Asp-97, and Asp-102. Disordered stretches follow at residues 111 to 140 and 304 to 324; these read ERSTSEPAVPPEEAEPHTEPEEQVPVEAEP and EEQQEVPPETNRKTDDPEQKA. Positions 313–324 are enriched in basic and acidic residues; it reads TNRKTDDPEQKA. The TPR 1 repeat unit spans residues 341–374; it reads IKAELDAAEKLRKRGKIEEAVNAFKELVRKYPQS. Asn-452 is a glycosylation site (N-linked (GlcNAc...) asparagine). TPR repeat units follow at residues 454-487, 489-521, and 525-557; these read TSLKNDLGVGYLLIGDNDNAKKVYEEVLSVTPND, FAKVHYGFILKAQNKIAESIPYLKEGIESGDPG, and GRFYFHLGDAMQRVGNKEAYKWYELGHKRGHFA. Trp-625 serves as a coordination point for 2-oxoglutarate. Cys-641 and Cys-648 are joined by a disulfide. Ser-668 contacts 2-oxoglutarate. His-679 is a binding site for Fe cation. A 2-oxoglutarate-binding site is contributed by 688–690; that stretch reads RMH. An N-linked (GlcNAc...) asparagine glycan is attached at Asn-706. His-725 contributes to the Fe cation binding site. Residue Arg-735 participates in 2-oxoglutarate binding.

The protein belongs to the aspartyl/asparaginyl beta-hydroxylase family. Monomer. Isoform 8 interacts with ORAI1 and STIM1. Isoform 4 interacts with CASQ2. The cofactor is Fe cation. In terms of tissue distribution, isoform 1 is detected in all tissues tested. Isoform 8 is mainly expressed in pancreas, heart, brain, kidney and liver. Isoform 8 is expressed in kidney (at protein level).

It localises to the endoplasmic reticulum membrane. The protein resides in the sarcoplasmic reticulum membrane. The enzyme catalyses L-aspartyl-[protein] + 2-oxoglutarate + O2 = 3-hydroxy-L-aspartyl-[protein] + succinate + CO2. In terms of biological role, specifically hydroxylates an Asp or Asn residue in certain epidermal growth factor-like (EGF) domains of a number of proteins. Membrane-bound Ca(2+)-sensing protein, which is a structural component of the ER-plasma membrane junctions. Isoform 8 regulates the activity of Ca(+2) released-activated Ca(+2) (CRAC) channels in T-cells. The polypeptide is Aspartyl/asparaginyl beta-hydroxylase (ASPH) (Homo sapiens (Human)).